The sequence spans 374 residues: Patatin-2-Kuras 4 (374 aa).

The signal sequence occupies residues 1-11; that stretch reads MILATTSSTCA. In terms of domain architecture, PNPLA spans 20-217; that stretch reads LSIDGGGIKG…TVGDPALLSL (198 aa). A GXGXXG motif is present at residues 24-29; it reads GGGIKG. The GXSXG signature appears at 63–67; that stretch reads GTSTG. Residue Ser-65 is the Nucleophile of the active site. Residue Asn-103 is glycosylated (N-linked (GlcNAc...) asparagine). The Proton acceptor role is filled by Asp-203. Residues 203 to 205 carry the DGA/G motif; the sequence is DGG. A coiled-coil region spans residues 309-372; it reads ENALTGTTTE…DRKKLRANKA (64 aa).

This sequence belongs to the patatin family.

The protein resides in the vacuole. Functionally, probable lipolytic acyl hydrolase (LAH), an activity which is thought to be involved in the response of tubers to pathogens. The sequence is that of Patatin-2-Kuras 4 (pat2-k4) from Solanum tuberosum (Potato).